A 245-amino-acid chain; its full sequence is uncharacterized protein (245 aa).

The segment covering 162–174 (KEQSDVTTSERTR) has biased composition (basic and acidic residues). The disordered stretch occupies residues 162-183 (KEQSDVTTSERTRSPPGSSKTT).

This is an uncharacterized protein from Homo sapiens (Human).